The primary structure comprises 640 residues: uncharacterized protein (640 aa).

Helical transmembrane passes span 8 to 28 (GGVVTSGVGVAGVGVGLLGMF), 52 to 72 (LGGFFMALTGAVAAPVGCYLI), 90 to 110 (LFVAAMLLVPAAGSVTTFLLA), 136 to 156 (LWYAVMTQLGFIAILVGLVVL), 179 to 199 (VFMLTLVGFGSKAGLVPLHAW), 208 to 228 (PSPVSALMSAAMVNLGIYGIV), 241 to 261 (WWGLALLAVGGTSALYGVLQA), 277 to 297 (ENMGLITLALGAATLFADTGA), 298 to 318 (YGPASIAAAAAMLHMIAHAAF), 352 to 372 (TVFFGVAALGACGLPLGAGFV), 391 to 411 (IVALTTPLAVGVVALATGLSV), 446 to 466 (AIAAGACLVLAVAPLLVAPMV), 497 to 517 (IAPGVIAAAVLAAALAVAVLA), and 619 to 639 (GSVHRYLAYGALGVLIVLVVA).

This sequence belongs to the complex I subunit 4 family.

The protein localises to the cell membrane. This is an uncharacterized protein from Mycobacterium tuberculosis (strain CDC 1551 / Oshkosh).